A 362-amino-acid chain; its full sequence is Aminomethyltransferase (362 aa).

Belongs to the GcvT family. In terms of assembly, the glycine cleavage system is composed of four proteins: P, T, L and H.

It carries out the reaction N(6)-[(R)-S(8)-aminomethyldihydrolipoyl]-L-lysyl-[protein] + (6S)-5,6,7,8-tetrahydrofolate = N(6)-[(R)-dihydrolipoyl]-L-lysyl-[protein] + (6R)-5,10-methylene-5,6,7,8-tetrahydrofolate + NH4(+). In terms of biological role, the glycine cleavage system catalyzes the degradation of glycine. This is Aminomethyltransferase from Bacillus subtilis (strain 168).